The following is a 198-amino-acid chain: Recombination protein RecR (198 aa).

The C4-type zinc-finger motif lies at 57 to 72 (CRQCRTLSEEELCPQC). The Toprim domain maps to 80-174 (SLLCVVEGPL…TLSRIAHGVP (95 aa)).

The protein belongs to the RecR family.

Functionally, may play a role in DNA repair. It seems to be involved in an RecBC-independent recombinational process of DNA repair. It may act with RecF and RecO. The chain is Recombination protein RecR from Pseudomonas paraeruginosa (strain DSM 24068 / PA7) (Pseudomonas aeruginosa (strain PA7)).